The primary structure comprises 893 residues: TBC domain-containing protein kinase-like protein (893 aa).

The region spanning 1 to 274 is the Protein kinase domain; that stretch reads MFPLRDTEMG…EELMHDHLFS (274 aa). The Rab-GAP TBC domain occupies 466–651; the sequence is DIPPLLRGIT…HLWDTLLLGN (186 aa). Residues 790-889 form the Rhodanese domain; the sequence is SKPKLLVVDI…IKPTGLLTVP (100 aa).

This sequence belongs to the protein kinase superfamily. As to quaternary structure, component of the FERRY complex.

The protein localises to the cytoplasm. It localises to the cytoskeleton. It is found in the spindle. Its subcellular location is the midbody. The protein resides in the early endosome. Its function is as follows. Component of the FERRY complex (Five-subunit Endosomal Rab5 and RNA/ribosome intermediary). The FERRY complex directly interacts with mRNAs and RAB5A, and functions as a RAB5A effector involved in the localization and the distribution of specific mRNAs most likely by mediating their endosomal transport. The complex recruits mRNAs and ribosomes to early endosomes through direct mRNA-interaction. Also involved in the modulation of mTOR signaling and expression of mTOR complex components. Involved in the control of actin-cytoskeleton organization. The sequence is that of TBC domain-containing protein kinase-like protein from Gallus gallus (Chicken).